The chain runs to 463 residues: Gamma-aminobutyric acid receptor subunit alpha-5 (463 aa).

Residues Met-1–Ser-25 form the signal peptide. Residues Ser-26 to Phe-260 are Extracellular-facing. Residue Asn-45 is glycosylated (N-linked (GlcNAc...) asparagine). Arg-101 contacts 4-aminobutanoate. Asn-145 carries an N-linked (GlcNAc...) asparagine glycan. Thr-164 serves as a coordination point for 4-aminobutanoate. Cys-173 and Cys-187 form a disulfide bridge. N-linked (GlcNAc...) asparagine glycosylation is found at Asn-207 and Asn-236. The next 3 helical transmembrane spans lie at Val-261–Leu-281, Pro-287–Arg-308, and Ala-319–Thr-340. Residues Val-341–Lys-428 lie on the Cytoplasmic side of the membrane. A Glycyl lysine isopeptide (Lys-Gly) (interchain with G-Cter in ubiquitin) cross-link involves residue Lys-355. The interval Pro-387 to Ala-408 is disordered. A helical membrane pass occupies residues Met-429 to Tyr-449.

Belongs to the ligand-gated ion channel (TC 1.A.9) family. Gamma-aminobutyric acid receptor (TC 1.A.9.5) subfamily. GABRA5 sub-subfamily. As to quaternary structure, heteropentamer, formed by a combination of alpha (GABRA1-6), beta (GABRB1-3), gamma (GABRG1-3), delta (GABRD), epsilon (GABRE), rho (GABRR1-3), pi (GABRP) and theta (GABRQ) chains, each subunit exhibiting distinct physiological and pharmacological properties. Expressed in brain, in hippocampal pyramidal neurons.

It localises to the postsynaptic cell membrane. It is found in the cell membrane. It catalyses the reaction chloride(in) = chloride(out). Its function is as follows. Alpha subunit of the heteropentameric ligand-gated chloride channel gated by gamma-aminobutyric acid (GABA), a major inhibitory neurotransmitter in the brain. GABA-gated chloride channels, also named GABA(A) receptors (GABAAR), consist of five subunits arranged around a central pore and contain GABA active binding site(s) located at the alpha and beta subunit interface(s). When activated by GABA, GABAARs selectively allow the flow of chloride anions across the cell membrane down their electrochemical gradient. GABAARs containing alpha-5/GABRA5 are mainly extrasynaptic and contribute to the tonic GABAergic inhibition of the hippocampus. Extrasynaptic alpha-5-containing GABAARs in CA1 pyramidal neurons play a role in learning and memory processes. The polypeptide is Gamma-aminobutyric acid receptor subunit alpha-5 (Mus musculus (Mouse)).